The following is a 434-amino-acid chain: Anaerobic glycerol-3-phosphate dehydrogenase subunit B (434 aa).

Belongs to the anaerobic G-3-P dehydrogenase subunit B family. As to quaternary structure, composed of a catalytic GlpA/B dimer and of membrane bound GlpC. Requires FMN as cofactor.

The catalysed reaction is a quinone + sn-glycerol 3-phosphate = dihydroxyacetone phosphate + a quinol. It participates in polyol metabolism; glycerol degradation via glycerol kinase pathway; glycerone phosphate from sn-glycerol 3-phosphate (anaerobic route): step 1/1. In terms of biological role, conversion of glycerol 3-phosphate to dihydroxyacetone. Uses fumarate or nitrate as electron acceptor. The polypeptide is Anaerobic glycerol-3-phosphate dehydrogenase subunit B (Histophilus somni (strain 2336) (Haemophilus somnus)).